Here is a 270-residue protein sequence, read N- to C-terminus: HTH-type transcriptional repressor DrrR1 (270 aa).

A compositionally biased stretch (low complexity) spans Met-1 to Thr-11. The tract at residues Met-1–Ile-28 is disordered. Residues Thr-49–Ser-109 form the HTH tetR-type domain. The H-T-H motif DNA-binding region spans Ser-72–Val-91.

Its subcellular location is the cytoplasm. With respect to regulation, daunorubicin and doxorubicin can induce dissociation of DrrR1 from its DNA complex. Ampicillin cannot release DrrR1 from the DNA complex at the same concentrations. In terms of biological role, transcriptional regulator that modulates the expression of the drrA2-drrB2 genes, which encode an ABC transporter involved in daunorubicin efflux, in response to intracellular daunorubicin/doxorubicin accumulation. In the absence of daunorubicin or doxorubicin, binds directly to the drrA2-drrB2 promoter region and negatively regulates expression of the genes. In the presence of daunorubicin or doxorubicin, DrrR1 dissociates from DNA, leading to the transcription of the genes. The sequence is that of HTH-type transcriptional repressor DrrR1 from Streptomyces coeruleorubidus.